We begin with the raw amino-acid sequence, 113 residues long: UPF0339 protein MS1092 (113 aa).

2 consecutive repeat copies span residues 11 to 59 (AKDG…NFEF) and 62 to 110 (NKNG…IKDI).

Belongs to the UPF0339 family. Duplicated subfamily.

This Mannheimia succiniciproducens (strain KCTC 0769BP / MBEL55E) protein is UPF0339 protein MS1092.